A 512-amino-acid polypeptide reads, in one-letter code: Glycerol kinase (512 aa).

Thr-14 provides a ligand contact to ADP. 3 residues coordinate ATP: Thr-14, Thr-15, and Ser-16. Residue Thr-14 participates in sn-glycerol 3-phosphate binding. Arg-18 lines the ADP pocket. Arg-83, Glu-84, Tyr-135, and Asp-244 together coordinate sn-glycerol 3-phosphate. Positions 83, 84, 135, 244, and 245 each coordinate glycerol. ADP is bound by residues Thr-266, Gly-309, Gly-410, and Asn-414. Residues Thr-266, Gly-309, and Gly-410 each coordinate ATP.

Belongs to the FGGY kinase family.

It carries out the reaction glycerol + ATP = sn-glycerol 3-phosphate + ADP + H(+). It participates in polyol metabolism; glycerol degradation via glycerol kinase pathway; sn-glycerol 3-phosphate from glycerol: step 1/1. With respect to regulation, inhibited by fructose 1,6-bisphosphate (FBP). Key enzyme in the regulation of glycerol uptake and metabolism. Catalyzes the phosphorylation of glycerol to yield sn-glycerol 3-phosphate. The sequence is that of Glycerol kinase from Gluconobacter oxydans (strain 621H) (Gluconobacter suboxydans).